The sequence spans 160 residues: Large ribosomal subunit protein uL22c (160 aa).

The protein belongs to the universal ribosomal protein uL22 family. As to quaternary structure, part of the 50S ribosomal subunit.

Its subcellular location is the plastid. The protein resides in the chloroplast. In terms of biological role, this protein binds specifically to 23S rRNA. Its function is as follows. The globular domain of the protein is located near the polypeptide exit tunnel on the outside of the subunit, while an extended beta-hairpin is found that lines the wall of the exit tunnel in the center of the 70S ribosome. The polypeptide is Large ribosomal subunit protein uL22c (rpl22) (Crucihimalaya wallichii (Rock-cress)).